Reading from the N-terminus, the 428-residue chain is Adenylosuccinate synthetase (428 aa).

Residues 12–18 (GDEGKGK) and 40–42 (GHT) contribute to the GTP site. D13 serves as the catalytic Proton acceptor. Residues D13 and G40 each contribute to the Mg(2+) site. IMP-binding positions include 13–16 (DEGK), 38–41 (NAGH), T130, R144, Q225, T240, and R304. H41 acts as the Proton donor in catalysis. 300 to 306 (VTTGRAR) provides a ligand contact to substrate. GTP contacts are provided by residues R306, 332–334 (KID), and 414–416 (SVG).

Belongs to the adenylosuccinate synthetase family. As to quaternary structure, homodimer. The cofactor is Mg(2+).

The protein localises to the cytoplasm. The enzyme catalyses IMP + L-aspartate + GTP = N(6)-(1,2-dicarboxyethyl)-AMP + GDP + phosphate + 2 H(+). It functions in the pathway purine metabolism; AMP biosynthesis via de novo pathway; AMP from IMP: step 1/2. Functionally, plays an important role in the de novo pathway of purine nucleotide biosynthesis. Catalyzes the first committed step in the biosynthesis of AMP from IMP. The sequence is that of Adenylosuccinate synthetase from Clostridium kluyveri (strain ATCC 8527 / DSM 555 / NBRC 12016 / NCIMB 10680 / K1).